The chain runs to 132 residues: Small ribosomal subunit protein uS8 (132 aa).

The protein belongs to the universal ribosomal protein uS8 family. In terms of assembly, part of the 30S ribosomal subunit. Contacts proteins S5 and S12.

One of the primary rRNA binding proteins, it binds directly to 16S rRNA central domain where it helps coordinate assembly of the platform of the 30S subunit. The sequence is that of Small ribosomal subunit protein uS8 from Lactobacillus johnsonii (strain CNCM I-12250 / La1 / NCC 533).